Consider the following 492-residue polypeptide: Probable cytosol aminopeptidase (492 aa).

2 residues coordinate Mn(2+): Lys-259 and Asp-264. The active site involves Lys-271. Mn(2+)-binding residues include Asp-283, Asp-342, and Glu-344. Arg-346 is a catalytic residue.

This sequence belongs to the peptidase M17 family. The cofactor is Mn(2+).

The protein resides in the cytoplasm. The enzyme catalyses Release of an N-terminal amino acid, Xaa-|-Yaa-, in which Xaa is preferably Leu, but may be other amino acids including Pro although not Arg or Lys, and Yaa may be Pro. Amino acid amides and methyl esters are also readily hydrolyzed, but rates on arylamides are exceedingly low.. It carries out the reaction Release of an N-terminal amino acid, preferentially leucine, but not glutamic or aspartic acids.. Its function is as follows. Presumably involved in the processing and regular turnover of intracellular proteins. Catalyzes the removal of unsubstituted N-terminal amino acids from various peptides. The polypeptide is Probable cytosol aminopeptidase (pepA) (Synechocystis sp. (strain ATCC 27184 / PCC 6803 / Kazusa)).